The following is a 374-amino-acid chain: Protein RecA (374 aa).

ATP is bound at residue 66–73; it reads GPESSGKT. Residues 326–374 form a disordered region; sequence KLGVGVHPEESATEPGADAASAAPADAAPAVPAPTTAKATKSKATAAKS. Over residues 338–374 the composition is skewed to low complexity; sequence TEPGADAASAAPADAAPAVPAPTTAKATKSKATAAKS.

Belongs to the RecA family.

It localises to the cytoplasm. Functionally, can catalyze the hydrolysis of ATP in the presence of single-stranded DNA, the ATP-dependent uptake of single-stranded DNA by duplex DNA, and the ATP-dependent hybridization of homologous single-stranded DNAs. It interacts with LexA causing its activation and leading to its autocatalytic cleavage. This is Protein RecA from Streptomyces coelicolor (strain ATCC BAA-471 / A3(2) / M145).